Reading from the N-terminus, the 247-residue chain is Osmotin-like protein OSML81 (247 aa).

The first 21 residues, 1–21, serve as a signal peptide directing secretion; it reads MGYLRSSFIFSLLAFVTYTYA. Disulfide bonds link cysteine 30–cysteine 225, cysteine 72–cysteine 82, cysteine 87–cysteine 93, cysteine 141–cysteine 213, cysteine 146–cysteine 196, cysteine 154–cysteine 164, cysteine 168–cysteine 177, and cysteine 178–cysteine 183.

It belongs to the thaumatin family.

This is Osmotin-like protein OSML81 from Solanum commersonii (Commerson's wild potato).